The primary structure comprises 1073 residues: MTSTSAVDGGLGSETAWLEDLLREVQLEQFLDRIRDDLQVTRLAHFDYVLPDDLERCGLGKPAIRRLMEAVRKKKAHQWRKNILSKLIGGGKQPSSKKQSSAARESSQGNGTQLTCLIHEKDITMGLKLGDGSFGVVRRGEWSASPAGKVIPVAVKVLKSDNLTQPGIIDDFFREVQAMHALDHANLVRLYGVVLSQPMMMITELAERGSLLDTLRKQCRHTSLTIIWNWSVQIVTGMAYLEQKRFLHRDLACRNVLLAAGNKIKIGDFGLMRALPQEDDCYVMSEHKKVPFPWCAPESLRFRQFSHASDTWMFGVTLWEMFSFGEDPWVGLNGSQILRKIDREGERLHQPDACPPDVYAMMLQCWDKTPAERPTFAALKEYLASMSPPVMRASRSHHESKGLQIEPGDTIAIIDGRHELKLIKGQNQRTFDIGIFPRNLLEQRKVGAAGDVVMRSSVGNGSSSSPFGFCWGGAAAMANGDDRQRKCASMTNQPHAKERKSTSSKQFAYNKLVNDSATGLQRRNAVKHKGVVVGPQRPPPPQFQQEGILIDISPDMRPIAEAGTGGAKGAGDSSSLQADSSFCILDAPIDVPTYAGSSGSGDLNVSPTYYNEQPQFDFDPAKMTASPGRLQPPPYQMPPTYSNTMEFVQKRDLHQQQLATPVRERDPFDTTNVETTVALYSNFNQSLEAASPPAPIYNSPSVRKSLFGGSKSNKENIPALESAAMQLNLSNLTLERHDATCIQPVEPVPAPPGDGVLLDKSFIAELEKDMYSNGQNRAQEEYQRNSTQMYASKDMVYKQNLTPLKNGAAPGSVHSNHSSPSSTASPKQNNVEAAAAAAATTQSVVNRIWYEQVASTQSEYYAQPPTEQAEEQIYQNHRHQQQQQQELNHSFVAISNRVVAPKNNAYSSTASLYDAVAASTAGSTYYGQVPNGSGAVLYDEVTQDDYLRPTRPAPLAPPPLSAQQIQRRMEKMRLQQQQQLDGAHQLYAPVPSDYGREQEKLQQLMQELGSSAVEQDVRNALRAASGDVGLATRHYKIDQLARLGVAGRPQCEQALQQTNWSLEVAAELLLNAG.

Residues 88 to 110 are disordered; the sequence is IGGGKQPSSKKQSSAARESSQGN. In terms of domain architecture, Protein kinase spans 123-383; it reads ITMGLKLGDG…PTFAALKEYL (261 aa). Residues 129–137 and lysine 156 contribute to the ATP site; that span reads LGDGSFGVV. The active-site Proton acceptor is aspartate 250. The SH3 domain maps to 386–446; that stretch reads MSPPVMRASR…PRNLLEQRKV (61 aa). Disordered regions lie at residues 484-506, 803-834, and 862-882; these read QRKC…SSKQ, PLKN…VEAA, and AQPP…HQQQ. The segment covering 812–826 has biased composition (low complexity); the sequence is SVHSNHSSPSSTASP. In terms of domain architecture, UBA spans 1029-1072; sequence GLATRHYKIDQLARLGVAGRPQCEQALQQTNWSLEVAAELLLNA.

Belongs to the protein kinase superfamily. Tyr protein kinase family. In terms of assembly, interacts with yki and ex. Interacts with drk. Likely to be a member of an axonal guidance receptor complex that includes SH3PX1, dock and Dscam. Interacts (via N-terminus) with dock. Interacts with SH3PX1 (via SH3 domain). It depends on Mg(2+) as a cofactor. Phosphorylated. Autophosphorylated. As to expression, detected in ovaries (at protein level). In adults, relatively higher expression in the head compared to the body.

Its subcellular location is the cytoplasm. It is found in the cytoplasmic vesicle. The protein resides in the clathrin-coated vesicle. It catalyses the reaction L-tyrosyl-[protein] + ATP = O-phospho-L-tyrosyl-[protein] + ADP + H(+). The catalysed reaction is L-threonyl-[protein] + ATP = O-phospho-L-threonyl-[protein] + ADP + H(+). In terms of biological role, non-receptor tyrosine-protein and serine/threonine-protein kinase that is implicated in diverse biological functions such as cell survival, cell differentiation, cell growth and proliferation. Phosphorylates SH3PX1 and ex. Phosphorylates SH3PX1 predominantly on 'Tyr-56', which likely promotes the recruitment of SH3PX1 to an axonal guidance receptor complex that includes dock and Dscam; because phosphorylation of SH3PX1 increases its interaction with the complex member dock while decreasing its interaction with the actin cytoskeleton modulator WASp. In the wing and eye, promotes tissue growth, and during embryogenesis coordinates cell shape changes required for correct dorsal closure. Functions in the negative regulation of the Hippo/SWH (Sav/Wts/Hpo) signaling pathway by enhancing yki activity thereby promoting cell proliferation and inhibiting apoptosis. This is accomplished, at least in part, by phosphorylating ex thereby reducing its ability to efficiently activate the Hippo signaling cascade. In the eye disk, wing disk and possibly spermatids, inhibits programmed cell death induced by hid and rpr through a mechanism that is independent of the MAP kinase signal transduction pathway. Essential for male and female fertility. During oogenesis required for the correct temporal assembly, and consequently the catalytic activity of long Ctps filaments (cytoophidium) in the germline nurse cells, likely by phosphorylating an unidentified substrate that is essential for linking individual Ctps filaments into large, catalytically active assemblies. The chain is Activated Cdc42 kinase Ack from Drosophila melanogaster (Fruit fly).